Consider the following 429-residue polypeptide: Phosphoglucosamine mutase (429 aa).

The Phosphoserine intermediate role is filled by Ser-96. Ser-96, Asp-230, Asp-232, and Asp-234 together coordinate Mg(2+). Ser-96 bears the Phosphoserine mark.

The protein belongs to the phosphohexose mutase family. Mg(2+) serves as cofactor. Post-translationally, activated by phosphorylation.

It carries out the reaction alpha-D-glucosamine 1-phosphate = D-glucosamine 6-phosphate. Its function is as follows. Catalyzes the conversion of glucosamine-6-phosphate to glucosamine-1-phosphate. This is Phosphoglucosamine mutase from Thermotoga petrophila (strain ATCC BAA-488 / DSM 13995 / JCM 10881 / RKU-1).